Reading from the N-terminus, the 358-residue chain is Src kinase-associated phosphoprotein 2 (358 aa).

Phosphoserine is present on residues S5 and S9. The homodimerization stretch occupies residues 14-64 (PEEIRNLLADVETFVADTLKGENLSKKAKEKRESLIKKIKDVKSVYLQEFQ). Residue Y75 is modified to Phosphotyrosine. Residues S87 and S90 each carry the phosphoserine modification. The PH domain occupies 116 to 219 (FVIKAGYLEK…WVQQLKFILQ (104 aa)). 2 positions are modified to phosphotyrosine: Y151 and Y197. S223 bears the Phosphoserine mark. Positions 232–292 (ERGELYDDVD…RDSVHHTSGD (61 aa)) are disordered. The segment covering 255–270 (IDDEIYEELPEEEEDT) has biased composition (acidic residues). Y260 carries the post-translational modification Phosphotyrosine; by FYN. Phosphoserine is present on residues S272, S282, and S285. The segment covering 274-292 (KMDEQGKGSRDSVHHTSGD) has biased composition (basic and acidic residues). Residues 296–357 (DYANFYQGLW…PKAYLMEMYD (62 aa)) form the SH3 domain.

It belongs to the SKAP family. Interacts with LAT, GRB2, PTK2B and PRAM1. Homodimer. Interacts with FYB1, which is required for SKAP2 protein stability. Interacts with PTPNS1. Part of a complex consisting of SKAP2, FYB1 and PTPNS1. Part of a complex consisting of SKAP2, FYB1 and PIRB. May interact with actin. May interact with FYN, HCK and LYN. Interacts with FASLG. In terms of processing, dephosphorylated on Tyr-75 by PTPN22. Phosphorylated by FYN on Tyr-260. In case of infection with Y.pseudotuberculosis, dephosphorylated by bacterial phosphatase yopH. As to expression, expressed in kidney, lung, liver, spleen, bone marrow and testis. Present in T-cells, B-cells, and all cells of the myelomonocytic lineage. Present in all brain regions, with highest levels in neurons from the Purkinje cell layer, hippocampal gyrus, cortex and substantia nigra (at protein level).

It is found in the cytoplasm. Its function is as follows. May be involved in B-cell and macrophage adhesion processes. In B-cells, may act by coupling the B-cell receptor (BCR) to integrin activation. May play a role in src signaling pathway. This chain is Src kinase-associated phosphoprotein 2 (Skap2), found in Mus musculus (Mouse).